We begin with the raw amino-acid sequence, 237 residues long: Proteasome subunit alpha type-5 (237 aa).

This sequence belongs to the peptidase T1A family. As to quaternary structure, the 26S proteasome consists of a 20S proteasome core and two 19S regulatory subunits. The 20S proteasome core is composed of 28 subunits that are arranged in four stacked rings, resulting in a barrel-shaped structure. The two end rings are each formed by seven alpha subunits, and the two central rings are each formed by seven beta subunits. The catalytic chamber with the active sites is on the inside of the barrel.

The protein resides in the cytoplasm. It localises to the nucleus. Functionally, the proteasome is a multicatalytic proteinase complex which is characterized by its ability to cleave peptides with Arg, Phe, Tyr, Leu, and Glu adjacent to the leaving group at neutral or slightly basic pH. The proteasome has an ATP-dependent proteolytic activity. This Oryza sativa subsp. japonica (Rice) protein is Proteasome subunit alpha type-5 (PAE1).